The chain runs to 125 residues: Small ribosomal subunit protein eS8 (125 aa).

Belongs to the eukaryotic ribosomal protein eS8 family. In terms of assembly, part of the 30S ribosomal subunit.

This Methanocorpusculum labreanum (strain ATCC 43576 / DSM 4855 / Z) protein is Small ribosomal subunit protein eS8.